The following is a 196-amino-acid chain: Holliday junction branch migration complex subunit RuvA (196 aa).

A domain I region spans residues 1–63; that stretch reads MYDYIKGILT…EDAHLLYGFA (63 aa). The interval 64 to 142 is domain II; that stretch reads TENEKSVFLS…MSEEAGPVQQ (79 aa). The flexible linker stretch occupies residues 142–146; sequence QVAPS. The tract at residues 147 to 196 is domain III; the sequence is SENIALEEAMEAMEALGYRPAELKKIKKFFEGTNDTAENYIKSALKMLMK.

It belongs to the RuvA family. Homotetramer. Forms an RuvA(8)-RuvB(12)-Holliday junction (HJ) complex. HJ DNA is sandwiched between 2 RuvA tetramers; dsDNA enters through RuvA and exits via RuvB. An RuvB hexamer assembles on each DNA strand where it exits the tetramer. Each RuvB hexamer is contacted by two RuvA subunits (via domain III) on 2 adjacent RuvB subunits; this complex drives branch migration. In the full resolvosome a probable DNA-RuvA(4)-RuvB(12)-RuvC(2) complex forms which resolves the HJ.

The protein localises to the cytoplasm. Its function is as follows. The RuvA-RuvB-RuvC complex processes Holliday junction (HJ) DNA during genetic recombination and DNA repair, while the RuvA-RuvB complex plays an important role in the rescue of blocked DNA replication forks via replication fork reversal (RFR). RuvA specifically binds to HJ cruciform DNA, conferring on it an open structure. The RuvB hexamer acts as an ATP-dependent pump, pulling dsDNA into and through the RuvAB complex. HJ branch migration allows RuvC to scan DNA until it finds its consensus sequence, where it cleaves and resolves the cruciform DNA. The polypeptide is Holliday junction branch migration complex subunit RuvA (Streptococcus suis (strain 98HAH33)).